The following is a 197-amino-acid chain: Imidazoleglycerol-phosphate dehydratase (197 aa).

It belongs to the imidazoleglycerol-phosphate dehydratase family.

The protein resides in the cytoplasm. It catalyses the reaction D-erythro-1-(imidazol-4-yl)glycerol 3-phosphate = 3-(imidazol-4-yl)-2-oxopropyl phosphate + H2O. Its pathway is amino-acid biosynthesis; L-histidine biosynthesis; L-histidine from 5-phospho-alpha-D-ribose 1-diphosphate: step 6/9. The sequence is that of Imidazoleglycerol-phosphate dehydratase from Pseudomonas syringae pv. syringae (strain B728a).